A 405-amino-acid polypeptide reads, in one-letter code: D-threonate kinase (405 aa).

Residues D12, R59, and K88–S91 each bind substrate. ATP contacts are provided by residues S243, G337 to G340, and G383.

Belongs to the four-carbon acid sugar kinase family.

It carries out the reaction D-threonate + ATP = 4-O-phospho-D-threonate + ADP + H(+). Catalyzes the ATP-dependent phosphorylation of D-threonate to D-threonate 4-phosphate. Can also phosphorylate 4-hydroxy-L-threonine, with lower efficiency. This chain is D-threonate kinase, found in Bordetella bronchiseptica (strain ATCC BAA-588 / NCTC 13252 / RB50) (Alcaligenes bronchisepticus).